We begin with the raw amino-acid sequence, 415 residues long: Gamma-glutamyl phosphate reductase (415 aa).

This sequence belongs to the gamma-glutamyl phosphate reductase family.

It is found in the cytoplasm. It catalyses the reaction L-glutamate 5-semialdehyde + phosphate + NADP(+) = L-glutamyl 5-phosphate + NADPH + H(+). It functions in the pathway amino-acid biosynthesis; L-proline biosynthesis; L-glutamate 5-semialdehyde from L-glutamate: step 2/2. Its function is as follows. Catalyzes the NADPH-dependent reduction of L-glutamate 5-phosphate into L-glutamate 5-semialdehyde and phosphate. The product spontaneously undergoes cyclization to form 1-pyrroline-5-carboxylate. The chain is Gamma-glutamyl phosphate reductase from Listeria innocua serovar 6a (strain ATCC BAA-680 / CLIP 11262).